A 159-amino-acid polypeptide reads, in one-letter code: NADH-quinone oxidoreductase subunit B (159 aa).

[4Fe-4S] cluster-binding residues include cysteine 36, cysteine 37, cysteine 102, and cysteine 132.

The protein belongs to the complex I 20 kDa subunit family. As to quaternary structure, NDH-1 is composed of 14 different subunits. Subunits NuoB, C, D, E, F, and G constitute the peripheral sector of the complex. [4Fe-4S] cluster is required as a cofactor.

Its subcellular location is the cell inner membrane. The catalysed reaction is a quinone + NADH + 5 H(+)(in) = a quinol + NAD(+) + 4 H(+)(out). Its function is as follows. NDH-1 shuttles electrons from NADH, via FMN and iron-sulfur (Fe-S) centers, to quinones in the respiratory chain. Couples the redox reaction to proton translocation (for every two electrons transferred, four hydrogen ions are translocated across the cytoplasmic membrane), and thus conserves the redox energy in a proton gradient. The sequence is that of NADH-quinone oxidoreductase subunit B from Paracidovorax citrulli (strain AAC00-1) (Acidovorax citrulli).